Reading from the N-terminus, the 546-residue chain is Calnexin homolog (546 aa).

The signal sequence occupies residues 1–25 (MGERKGIPMALGLLAMILFFIASSS). Residues 26–475 (SHLVRASDDA…EKAEKQPNLT (450 aa)) lie on the Lumenal side of the membrane. The Ca(2+) site is built by Ser43 and Asp74. Cysteines 117 and 152 form a disulfide. An alpha-D-glucoside is bound by residues Tyr121, Lys123, Tyr143, and Asp150. The tract at residues 217–329 (LSSEDFEPPL…PGCGEWKRPT (113 aa)) is disordered. The segment at 232–365 (IPDPDDKKPE…REIPNPEYFE (134 aa)) is p domain (Extended arm). The span at 233-249 (PDPDDKKPEDWDERAKI) shows a compositional bias: basic and acidic residues. 5 tandem repeats follow at residues 234 to 245 (DPDDKKPEDWDE), 251 to 262 (DPSAVKPDDWDE), 270 to 281 (DEEAEKPEGWLD), 289 to 300 (DPEATKPEDWDD), and 304 to 314 (GEWEAPKIENP). 2 4 X approximate repeats regions span residues 234–300 (DPDD…DWDD) and 304–361 (GEWE…IPNP). Composition is skewed to acidic residues over residues 259–290 (DWDE…IDDP) and 297–306 (DWDDEEDGEW). Cys316 and Cys322 are joined by a disulfide. Tandem repeats lie at residues 323 to 333 (GEWKRPTKRNP), 337 to 347 (GKWSAPYIDNP), and 351 to 361 (GIWKPREIPNP). Glu380 provides a ligand contact to an alpha-D-glucoside. A Ca(2+)-binding site is contributed by Asp391. N-linked (GlcNAc...) asparagine glycosylation is present at Asn473. The helical transmembrane segment at 476 to 496 (IGILVAVVVVFVSIFFRLIFG) threads the bilayer. The Cytoplasmic segment spans residues 497 to 546 (GKKPAKVEKKPERTEASNNQGSGENEENKEKEKQKEEASNAARRRPRRET). 2 stretches are compositionally biased toward basic and acidic residues: residues 501–511 (AKVEKKPERTE) and 522–534 (EENK…KEEA). The interval 501–546 (AKVEKKPERTEASNNQGSGENEENKEKEKQKEEASNAARRRPRRET) is disordered.

Belongs to the calreticulin family.

The protein localises to the endoplasmic reticulum membrane. Its function is as follows. Calcium-binding protein that interacts with newly synthesized monoglucosylated glycoproteins in the endoplasmic reticulum. It may act in assisting protein assembly and/or in the retention within the ER of unassembled protein subunits. It seems to play a major role in the quality control apparatus of the ER by the retention of incorrectly folded proteins. The sequence is that of Calnexin homolog from Glycine max (Soybean).